The sequence spans 367 residues: Putative heat shock 70 kDa protein 7 (367 aa).

This sequence belongs to the heat shock protein 70 family.

The protein is Putative heat shock 70 kDa protein 7 (HSPA7) of Homo sapiens (Human).